The primary structure comprises 323 residues: Macrolide efflux protein A (323 aa).

9 helical membrane passes run 6-26, 51-71, 105-125, 128-148, 182-202, 219-239, 245-265, 270-290, and 303-323; these read VLSM…AIGV, LTIV…VLFI, SLQS…YSVW, NAII…VLIV, FALL…NALF, ITEI…GLFG, ILLI…SGLL, FFIF…YSGV, and YLGR…PIGL.

It belongs to the major facilitator superfamily. Drug:H(+) antiporter-3 (DHA3) (TC 2.A.1.21) family.

It is found in the cell membrane. Its function is as follows. Confers resistance to 14-membered macrolides including erythromycin and to 15-membered macrolides but not to 16-membered macrolides, lincosamides or analogs of streptogramin B. May function as an efflux pump to regulate intracellular macrolide levels. This chain is Macrolide efflux protein A (mefA), found in Enterococcus faecalis (Streptococcus faecalis).